We begin with the raw amino-acid sequence, 397 residues long: Riboflavin biosynthesis protein RibBA (397 aa).

Residues 1 to 199 are DHBP synthase; the sequence is MFHRIEEALE…IEDLIAYRRH (199 aa). D-ribulose 5-phosphate is bound by residues 26 to 27, aspartate 31, 138 to 142, and glutamate 162; these read RE and RAGHT. Glutamate 27 is a Mg(2+) binding site. Histidine 141 is a Mg(2+) binding site. The interval 200–397 is GTP cyclohydrolase II; it reads HETLVTREVE…ASKLGHLLNL (198 aa). 250 to 254 is a binding site for GTP; it reads RVHSE. Residues cysteine 255, cysteine 266, and cysteine 268 each coordinate Zn(2+). Residues glutamine 271, 293 to 295, and threonine 315 each bind GTP; that span reads EGR. Catalysis depends on aspartate 327, which acts as the Proton acceptor; for GTP cyclohydrolase activity. The active-site Nucleophile; for GTP cyclohydrolase activity is the arginine 329. 2 residues coordinate GTP: threonine 350 and lysine 355.

This sequence in the N-terminal section; belongs to the DHBP synthase family. The protein in the C-terminal section; belongs to the GTP cyclohydrolase II family. The cofactor is Mg(2+). Mn(2+) serves as cofactor. Requires Zn(2+) as cofactor.

The catalysed reaction is D-ribulose 5-phosphate = (2S)-2-hydroxy-3-oxobutyl phosphate + formate + H(+). It catalyses the reaction GTP + 4 H2O = 2,5-diamino-6-hydroxy-4-(5-phosphoribosylamino)-pyrimidine + formate + 2 phosphate + 3 H(+). It participates in cofactor biosynthesis; riboflavin biosynthesis; 2-hydroxy-3-oxobutyl phosphate from D-ribulose 5-phosphate: step 1/1. It functions in the pathway cofactor biosynthesis; riboflavin biosynthesis; 5-amino-6-(D-ribitylamino)uracil from GTP: step 1/4. Functionally, catalyzes the conversion of D-ribulose 5-phosphate to formate and 3,4-dihydroxy-2-butanone 4-phosphate. In terms of biological role, catalyzes the conversion of GTP to 2,5-diamino-6-ribosylamino-4(3H)-pyrimidinone 5'-phosphate (DARP), formate and pyrophosphate. The protein is Riboflavin biosynthesis protein RibBA of Bacillus mycoides (strain KBAB4) (Bacillus weihenstephanensis).